Here is a 188-residue protein sequence, read N- to C-terminus: GTP cyclohydrolase 1 (188 aa).

Cys76, His79, and Cys148 together coordinate Zn(2+).

It belongs to the GTP cyclohydrolase I family. As to quaternary structure, homomer.

It catalyses the reaction GTP + H2O = 7,8-dihydroneopterin 3'-triphosphate + formate + H(+). Its pathway is cofactor biosynthesis; 7,8-dihydroneopterin triphosphate biosynthesis; 7,8-dihydroneopterin triphosphate from GTP: step 1/1. The sequence is that of GTP cyclohydrolase 1 from Thermoanaerobacter pseudethanolicus (strain ATCC 33223 / 39E) (Clostridium thermohydrosulfuricum).